A 347-amino-acid polypeptide reads, in one-letter code: Phenylalanine--tRNA ligase alpha subunit (347 aa).

Glu259 contacts Mg(2+).

The protein belongs to the class-II aminoacyl-tRNA synthetase family. Phe-tRNA synthetase alpha subunit type 1 subfamily. Tetramer of two alpha and two beta subunits. It depends on Mg(2+) as a cofactor.

Its subcellular location is the cytoplasm. It carries out the reaction tRNA(Phe) + L-phenylalanine + ATP = L-phenylalanyl-tRNA(Phe) + AMP + diphosphate + H(+). The polypeptide is Phenylalanine--tRNA ligase alpha subunit (Oenococcus oeni (strain ATCC BAA-331 / PSU-1)).